Reading from the N-terminus, the 320-residue chain is Ciliary microtubule inner protein 2A (320 aa).

Belongs to the CIMIP2 family. Microtubule inner protein component of sperm flagellar doublet microtubules. Expressed in sperm.

Its subcellular location is the cytoplasm. The protein localises to the cytoskeleton. It localises to the flagellum axoneme. In terms of biological role, microtubule inner protein (MIP) part of the dynein-decorated doublet microtubules (DMTs) in flagellum axoneme. Binds to the intra-tubulin interfaces. This Bos taurus (Bovine) protein is Ciliary microtubule inner protein 2A (CIMIP2A).